Reading from the N-terminus, the 145-residue chain is Putative pre-16S rRNA nuclease (145 aa).

This sequence belongs to the YqgF nuclease family.

It is found in the cytoplasm. Could be a nuclease involved in processing of the 5'-end of pre-16S rRNA. This is Putative pre-16S rRNA nuclease from Pseudomonas fluorescens (strain Pf0-1).